Consider the following 429-residue polypeptide: Forkhead box protein P3 (429 aa).

The interval 1 to 67 is disordered; sequence MPNPRPAKPM…SSLNPLPPSQ (67 aa). A Phosphoserine; by CDK2 modification is found at Ser19. Position 31 is an N6-acetyllysine (Lys31). The span at 56–67 shows a compositional bias: low complexity; that stretch reads TSSSLNPLPPSQ. Positions 67-75 match the Nuclear export signal motif; that stretch reads QLQLPTVPL. An LXXLL motif motif is present at residues 91 to 95; that stretch reads LQALL. The essential for transcriptional repressor activity and for interaction with KAT5 and HDAC7 stretch occupies residues 105–189; it reads LSTVDAHAQT…SNLLAAPQGS (85 aa). The segment at 148–198 is interaction with IKZF4; it reads LPPGINVASLEWVSREPALLCTFPRSGTPRKDSNLLAAPQGSYPLLANGVC. Phosphothreonine; by CDK2 is present on Thr175. The C2H2-type zinc-finger motif lies at 196-221; that stretch reads GVCKWPGCEKVFEEPEEFLKHCQADH. The Nuclear export signal signature appears at 238–247; sequence VQSLEQQLEL. The leucine-zipper stretch occupies residues 238–259; sequence VQSLEQQLELEKEKLGAMQAHL. Residues Lys249 and Lys251 each participate in a glycyl lysine isopeptide (Lys-Gly) (interchain with G-Cter in ubiquitin) cross-link. An N6-acetyllysine; alternate mark is found at Lys262 and Lys267. Residues Lys262 and Lys267 each participate in a glycyl lysine isopeptide (Lys-Gly) (interchain with G-Cter in ubiquitin); alternate cross-link. Residues 277-336 form an interaction with RUNX1 region; that stretch reads SSCCIVATSTQGSVLPAWSAPREAPDGGLFAVRRHLWGSHGNSSFPEFFHNMDYFKYHNM. The segment at residues 337 to 423 is a DNA-binding region (fork-head); the sequence is RPPFTYATLI…RKKRSQRPNK (87 aa). Lys393 participates in a covalent cross-link: Glycyl lysine isopeptide (Lys-Gly) (interchain with G-Cter in ubiquitin). Positions 414 to 417 match the Nuclear localization signal motif; sequence RKKR. Ser418 carries the post-translational modification Phosphoserine. Residues 418–429 constitute a propeptide that is removed on maturation; sequence SQRPNKCSNPCP.

In terms of assembly, homodimer. Dimerization is essential for its transcriptional regulator activity. Interacts with IKZF3. Interacts (via LXXLL motif) with isoform 4 of RORA (via AF-2 motif). Interacts with STUB1 and HSPA1A/B. Interacts with IKZF4, HDAC7 and KAT5. Interacts with RUNX1, RUNX2, RUNX3 and NFATC2. Interacts with RORC. Interacts with HDAC9 in the absence of T-cell stimulation. Interacts with RELA, PPP1CA, PPP1CB, PPP1CG, HSPA8 and USP7. Post-translationally, acetylation on lysine residues stabilizes FOXP3 and promotes differentiation of T-cells into induced regulatory T-cells (iTregs) associated with suppressive functions. Acetylation is mediated by a coordinated action of KAT5 and EP300/p300 acetyltransferases: EP300/p300 is required to enhance KAT5 autoacetylation, promoting acetylation of FOXP3 by KAT5. Deacetylated by SIRT1. In terms of processing, polyubiquitinated, leading to its proteasomal degradation in regulatory T-cells (Treg) which is mediated by STUB1 in a HSPA1A/B-dependent manner. Deubiquitinated by USP7 and USP44 leading to increase in protein stability. Phosphorylation at Ser-418 regulates its transcriptional repressor activity and consequently, regulatory T-cells (Treg) suppressive function. Phosphorylation by CDK2 negatively regulates its transcriptional activity and protein stability. Post-translationally, undergoes proteolytic cleavage in activated regulatory T-cells (Treg), and can be cleaved at either the N- or C-terminal site, or at both sites. Treg expressing the form cleaved at C-terminal site or both N- and C-terminal sites exhibit an increased induction of IL10 and an increased capacity to suppress proliferation of conventional T-cells in vitro. Treg expressing the form cleaved at only the C-terminal site are highly effective at preventing experimental colitis in an in vivo model of inflammatory bowel disease. In terms of tissue distribution, high level of expression in thymus and spleen.

It localises to the nucleus. The protein resides in the cytoplasm. In terms of biological role, transcriptional regulator which is crucial for the development and inhibitory function of regulatory T-cells (Treg). Plays an essential role in maintaining homeostasis of the immune system by allowing the acquisition of full suppressive function and stability of the Treg lineage, and by directly modulating the expansion and function of conventional T-cells. Can act either as a transcriptional repressor or a transcriptional activator depending on its interactions with other transcription factors, histone acetylases and deacetylases. The suppressive activity of Treg involves the coordinate activation of many genes, including CTLA4 and TNFRSF18 by FOXP3 along with repression of genes encoding cytokines such as interleukin-2 (IL2) and interferon-gamma (IFNG). Inhibits cytokine production and T-cell effector function by repressing the activity of two key transcription factors, RELA and NFATC2. Mediates transcriptional repression of IL2 via its association with histone acetylase KAT5 and histone deacetylase HDAC7. Can activate the expression of TNFRSF18, IL2RA and CTLA4 and repress the expression of IL2 and IFNG via its association with transcription factor RUNX1. Inhibits the differentiation of IL17 producing helper T-cells (Th17) by antagonizing RORC function, leading to down-regulation of IL17 expression, favoring Treg development. Inhibits the transcriptional activator activity of RORA. Can repress the expression of IL2 and IFNG via its association with transcription factor IKZF4. The protein is Forkhead box protein P3 (Foxp3) of Mus musculus (Mouse).